The following is a 272-amino-acid chain: NAD kinase (272 aa).

Asp-50 acts as the Proton acceptor in catalysis. NAD(+) contacts are provided by residues Asp-50–Gly-51, Asn-126–Glu-127, Arg-152, Asp-154, Thr-165–Ser-170, and Ala-189.

The protein belongs to the NAD kinase family. It depends on a divalent metal cation as a cofactor.

Its subcellular location is the cytoplasm. The enzyme catalyses NAD(+) + ATP = ADP + NADP(+) + H(+). Functionally, involved in the regulation of the intracellular balance of NAD and NADP, and is a key enzyme in the biosynthesis of NADP. Catalyzes specifically the phosphorylation on 2'-hydroxyl of the adenosine moiety of NAD to yield NADP. The sequence is that of NAD kinase from Streptococcus pneumoniae serotype 19F (strain G54).